The chain runs to 159 residues: Cytochrome c-type biogenesis protein CcmE (159 aa).

Over 1–8 (MNIRRKNR) the chain is Cytoplasmic. The helical; Signal-anchor for type II membrane protein transmembrane segment at 9–29 (LWIACAVLAGLALTIGLVLYA) threads the bilayer. Residues 30–159 (LRSNIDLFYT…PASVYKDPAS (130 aa)) are Periplasmic-facing. Residues histidine 130 and tyrosine 134 each contribute to the heme site. Positions 132-147 (ENYTPPEVEKAMEANH) are enriched in basic and acidic residues. Residues 132–159 (ENYTPPEVEKAMEANHRRPASVYKDPAS) form a disordered region.

Belongs to the CcmE/CycJ family.

Its subcellular location is the cell inner membrane. In terms of biological role, heme chaperone required for the biogenesis of c-type cytochromes. Transiently binds heme delivered by CcmC and transfers the heme to apo-cytochromes in a process facilitated by CcmF and CcmH. The sequence is that of Cytochrome c-type biogenesis protein CcmE from Escherichia coli (strain 55989 / EAEC).